Reading from the N-terminus, the 1263-residue chain is Kinesin-like protein KIN-12E (1263 aa).

The tract at residues 21–44 is disordered; the sequence is PAPSESLRSVPCTPEANTVSRDNH. Positions 35 to 44 are enriched in polar residues; that stretch reads EANTVSRDNH. Positions 93 to 430 constitute a Kinesin motor domain; the sequence is NVQVIIRTRP…LKFAQRAKLI (338 aa). 174–181 contacts ATP; it reads GQTGSGKT. Coiled-coil stretches lie at residues 679–737, 764–805, 831–881, 905–966, 1091–1168, and 1193–1251; these read SKKL…KIRS, AEAH…AEEN, ALEV…KRLL, SEKS…HQSE, TDLL…TIQE, and LRKE…VLSL.

Belongs to the TRAFAC class myosin-kinesin ATPase superfamily. Kinesin family. KIN-12 subfamily.

This Arabidopsis thaliana (Mouse-ear cress) protein is Kinesin-like protein KIN-12E.